We begin with the raw amino-acid sequence, 106 residues long: uncharacterized protein (106 aa).

The protein localises to the mitochondrion. This is an uncharacterized protein from Arabidopsis thaliana (Mouse-ear cress).